The chain runs to 525 residues: Serine/threonine protein phosphatase 2A 55 kDa regulatory subunit B beta isoform (525 aa).

Residues methionine 1–arginine 30 are disordered. 2 WD repeats span residues glutamine 48–serine 87 and glutamate 124–isoleucine 165. The interval asparagine 169–alanine 191 is disordered. Low complexity predominate over residues asparagine 171 to serine 189. 4 WD repeats span residues alanine 244–asparagine 282, aspartate 293–asparagine 333, glutamate 352–alanine 390, and aspartate 495–alanine 525.

The protein belongs to the phosphatase 2A regulatory subunit B family. In terms of assembly, PP2A consists of a common heteromeric enzyme, composed of a catalytic subunit (subunits C), a constant regulatory subunit (subunit A), and a variety of regulatory subunits such as subunits B (the R2/B/PR55/B55, R3/B''/PR72/PR130/PR59 and R5/B'/B56 families).

Its function is as follows. The B regulatory subunit may modulate substrate selectivity and catalytic activity, and may also direct the localization of the catalytic enzyme to a particular subcellular compartment. In Oryza sativa subsp. japonica (Rice), this protein is Serine/threonine protein phosphatase 2A 55 kDa regulatory subunit B beta isoform.